Reading from the N-terminus, the 263-residue chain is 3'-5' ssDNA/RNA exonuclease TatD (263 aa).

3 residues coordinate a divalent metal cation: Glu91, His127, and His152.

The protein belongs to the metallo-dependent hydrolases superfamily. TatD-type hydrolase family. TatD subfamily. As to quaternary structure, monomer. The cofactor is Mg(2+).

The protein localises to the cytoplasm. Its function is as follows. 3'-5' exonuclease that prefers single-stranded DNA and RNA. May play a role in the H(2)O(2)-induced DNA damage repair. This chain is 3'-5' ssDNA/RNA exonuclease TatD, found in Cronobacter sakazakii (strain ATCC BAA-894) (Enterobacter sakazakii).